The chain runs to 399 residues: MTKKRHLFTSESVTEGHPDKICDQISDSILDAILSKDANARVACETTVTTGLVLVAGEITTSTYVDIPKIVRETIQGIGYTRAKYGFDAETCAVLTSIDEQSADIAMGVDQALEAREGQMTDAEIEAIGAGDQGLMFGFACNETQELMPLPISLAHKLARRLTEVRKNDTLSYLRPDGKTQVTVEYDENGKPVRVDTIVISTQHHPDVTWEEIDRDLKEHVIKAVVPAELIDGETKFFINPTGRFVIGGPQGDAGLTGRKIIVDTYGGYARHGGGAFSGKDATKVDRSAAYAARYVAKNIVAAGLAEKAEVQLAYAIGVAQPVSISVDTFGTGKVSEDVLVELVRNNFDLRPAGIIKMLDLRRPIYKQTAAYGHFGRTDVDLSWERTDKAAALKEQAGL.

An ATP-binding site is contributed by His17. Asp19 is a binding site for Mg(2+). Glu45 serves as a coordination point for K(+). Positions 58 and 101 each coordinate L-methionine. A flexible loop region spans residues 101-111; it reads QSADIAMGVDQ. ATP is bound by residues 177-179, 244-245, Asp253, 259-260, Ala276, and Lys280; these read DGK, RF, and RK. Asp253 is an L-methionine binding site. Lys284 contacts L-methionine.

This sequence belongs to the AdoMet synthase family. Homotetramer; dimer of dimers. The cofactor is Mg(2+). It depends on K(+) as a cofactor.

The protein resides in the cytoplasm. The enzyme catalyses L-methionine + ATP + H2O = S-adenosyl-L-methionine + phosphate + diphosphate. It functions in the pathway amino-acid biosynthesis; S-adenosyl-L-methionine biosynthesis; S-adenosyl-L-methionine from L-methionine: step 1/1. Its function is as follows. Catalyzes the formation of S-adenosylmethionine (AdoMet) from methionine and ATP. The overall synthetic reaction is composed of two sequential steps, AdoMet formation and the subsequent tripolyphosphate hydrolysis which occurs prior to release of AdoMet from the enzyme. The protein is S-adenosylmethionine synthase of Bacillus anthracis (strain A0248).